Here is a 77-residue protein sequence, read N- to C-terminus: U10-lycotoxin-Ls1d (77 aa).

The N-terminal stretch at 1-20 is a signal peptide; the sequence is MKLIIFTGLFLFAIVSLIEA. Residues 21-26 constitute a propeptide that is removed on maturation; that stretch reads EEESGR.

It belongs to the neurotoxin 19 (CSTX) family. 09 (U10-Lctx) subfamily. Post-translationally, contains 4 disulfide bonds. In terms of tissue distribution, expressed by the venom gland.

It is found in the secreted. The protein is U10-lycotoxin-Ls1d of Lycosa singoriensis (Wolf spider).